Consider the following 337-residue polypeptide: o-succinylbenzoate synthase (337 aa).

Catalysis depends on Lys-142, which acts as the Proton donor. 3 residues coordinate Mg(2+): Asp-170, Glu-199, and Asp-222. Lys-248 serves as the catalytic Proton acceptor.

It belongs to the mandelate racemase/muconate lactonizing enzyme family. MenC type 1 subfamily. The cofactor is a divalent metal cation.

It catalyses the reaction (1R,6R)-6-hydroxy-2-succinyl-cyclohexa-2,4-diene-1-carboxylate = 2-succinylbenzoate + H2O. It functions in the pathway quinol/quinone metabolism; 1,4-dihydroxy-2-naphthoate biosynthesis; 1,4-dihydroxy-2-naphthoate from chorismate: step 4/7. Its pathway is quinol/quinone metabolism; menaquinone biosynthesis. Its function is as follows. Converts 2-succinyl-6-hydroxy-2,4-cyclohexadiene-1-carboxylate (SHCHC) to 2-succinylbenzoate (OSB). In Pasteurella multocida (strain Pm70), this protein is o-succinylbenzoate synthase.